The chain runs to 149 residues: Urease accessory protein UreE (149 aa).

Belongs to the UreE family.

Its subcellular location is the cytoplasm. In terms of biological role, involved in urease metallocenter assembly. Binds nickel. Probably functions as a nickel donor during metallocenter assembly. The chain is Urease accessory protein UreE from Ruegeria pomeroyi (strain ATCC 700808 / DSM 15171 / DSS-3) (Silicibacter pomeroyi).